The chain runs to 172 residues: UPF0316 protein Clos_0555 (172 aa).

Transmembrane regions (helical) follow at residues 3-23 (ALLG…MATI), 34-54 (VIAA…IGKV), and 61-81 (PLNV…GIFL).

The protein belongs to the UPF0316 family.

The protein resides in the cell membrane. This Alkaliphilus oremlandii (strain OhILAs) (Clostridium oremlandii (strain OhILAs)) protein is UPF0316 protein Clos_0555.